Reading from the N-terminus, the 58-residue chain is Microcin J25 (58 aa).

The propeptide occupies 1–37 (MIKHFHFNKLSSGKKNNVPSPAKGVIQIKKSASQLTK). Residues 38–45 (GGAGHVPE) constitute a cross-link (isoglutamyl glycine isopeptide (Gly-Glu)).

It is found in the secreted. Functionally, peptide antibiotic that functions through inhibition of the bacterial DNA-dependent RNA polymerase (RNAP). Inhibits transcription by binding deep within RNAP secondary channel, where it sterically blocks the folding of the trigger loop, which is essential for efficient catalysis. In addition, it also seems to restrict access of nucleotide substrates to the catalytic center, and shows a partially competitive mode of inhibition with them. Exhibits potent bacteriocidal activity against a range of Enterobacteriaceae, including several pathogenic E.coli, Salmonella and Shigella strains. Also acts on the cytoplasmic membrane of Salmonella newport, producing alteration of membrane permeability and disruption of the subsequent gradient dissipation, which inhibits several processes essential for cell viability, such as oxygen consumption. Induces bacterial filamentation in susceptible cells in a non-SOS-dependent way, but this phenotype may result from impaired transcription of genes coding for cell division proteins. The polypeptide is Microcin J25 (mcjA) (Escherichia coli).